A 275-amino-acid polypeptide reads, in one-letter code: Notch homolog 2 N-terminal-like protein B (275 aa).

Positions 1–25 are cleaved as a signal peptide; it reads MPALRPALLWALLALWLCCATPAHA. EGF-like domains are found at residues 26–63, 64–102, 105–143, and 144–180; these read LQCR…EYCQ, HRDP…EDCQ, TSHP…KECQ, and WTDA…QKCE. 17 disulfide bridges follow: cysteine 28/cysteine 41, cysteine 35/cysteine 51, cysteine 53/cysteine 62, cysteine 68/cysteine 79, cysteine 73/cysteine 90, cysteine 92/cysteine 101, cysteine 109/cysteine 121, cysteine 115/cysteine 131, cysteine 133/cysteine 142, cysteine 148/cysteine 159, cysteine 153/cysteine 168, cysteine 170/cysteine 179, cysteine 186/cysteine 198, cysteine 192/cysteine 207, cysteine 209/cysteine 218, cysteine 225/cysteine 236, and cysteine 230/cysteine 246. An N-linked (GlcNAc...) asparagine glycan is attached at asparagine 46. A glycan (N-linked (GlcNAc...) asparagine) is linked at asparagine 155. In terms of domain architecture, EGF-like 5; calcium-binding spans 182–219; the sequence is DVNECDIPGHCQHGGICLNLPGSYQCQCLQGFTGQYCD. One can recognise an EGF-like 6 domain in the interval 221–258; sequence LYVPCAPSPCVNGGTCRQTGDFTFECNCLPETVRRGTE.

The protein belongs to the NOTCH family. Interacts with NOTCH2. Interacts with DLL1; the interaction is direct. Expressed in radial glia neural stem cells during cortical development.

Its subcellular location is the secreted. In terms of biological role, human-specific protein that promotes neural progenitor proliferation and evolutionary expansion of the brain neocortex by regulating the Notch signaling pathway. Able to promote neural progenitor self-renewal, possibly by down-regulating neuronal differentiation genes, thereby delaying the differentiation of neuronal progenitors and leading to an overall final increase in neuronal production. Acts by enhancing the Notch signaling pathway via two different mechanisms that probably work in parallel to reach the same effect. Enhances Notch signaling pathway in a non-cell-autonomous manner via direct interaction with NOTCH2. Also promotes Notch signaling pathway in a cell-autonomous manner through inhibition of cis DLL1-NOTCH2 interactions, which promotes neuronal differentiation. The sequence is that of Notch homolog 2 N-terminal-like protein B from Homo sapiens (Human).